We begin with the raw amino-acid sequence, 577 residues long: Moesin (577 aa).

The 294-residue stretch at 2–295 folds into the FERM domain; that stretch reads PKTINVRVTT…GNHELYMRRR (294 aa). Phosphoserine is present on Ser74. At Lys79 the chain carries N6-acetyllysine. Lys83 carries the post-translational modification N6-succinyllysine. The short motif at 115 to 120 is the [IL]-x-C-x-x-[DE] motif element; it reads IYCPPE. A Phosphotyrosine modification is found at Tyr116. Cys117 carries the post-translational modification S-nitrosocysteine. N6-acetyllysine is present on residues Lys139 and Lys165. Residues 375–401 show a composition bias toward basic and acidic residues; that stretch reads LEQERKRAQSEAEKLAKERQEAEEAKE. Disordered stretches follow at residues 375 to 409 and 466 to 518; these read LEQERKRAQSEAEKLAKERQEAEEAKEALLQASQD and AMST…NERV. Ser407 is modified (phosphoserine). Residues 476 to 487 show a composition bias toward acidic residues; sequence AENEQDEQDENG. Positions 492-518 are enriched in basic and acidic residues; it reads AELRADAMAKDRSEEERTTEAEKNERV. At Ser527 the chain carries Phosphoserine. Residue Thr558 is modified to Phosphothreonine; by ROCK2 and STK10.

As to quaternary structure, in resting T-cells, part of a PAG1-NHERF1-MSN complex which is disrupted upon TCR activation. Interacts with NHERF1. Interacts with PPP1R16B. Interacts with PDZD8. Interacts with SELPLG and SYK; these interactions mediate the activation of SYK by SELPLG. Interacts with PDPN (via cytoplasmic domain); this interaction activates RHOA and promotes epithelial-mesenchymal transition. Interacts with SPN/CD43 cytoplasmic tail. Interacts with CD44. Interacts with ICAM2. Interacts with ICAM3 (via C-terminus). Interacts with PDZD8. Interacts with F-actin. Interacts with CD46. Interacts with PTPN6. Post-translationally, phosphorylation on Thr-558 is crucial for the formation of microvilli-like structures. Phosphorylation by ROCK2 suppresses the head-to-tail association of the N-terminal and C-terminal halves resulting in an opened conformation which is capable of actin and membrane-binding. Phosphorylation on Thr-558 by STK10 negatively regulates lymphocyte migration and polarization. In terms of processing, S-nitrosylation of Cys-117 is induced by interferon-gamma and oxidatively-modified low-densitity lipoprotein (LDL(ox)) implicating the iNOS-S100A8/9 transnitrosylase complex.

It is found in the cell membrane. Its subcellular location is the cytoplasm. It localises to the cytoskeleton. The protein localises to the apical cell membrane. The protein resides in the cell projection. It is found in the microvillus membrane. Its subcellular location is the microvillus. With respect to regulation, a head-to-tail association, of the N-terminal and C-terminal halves results in a closed conformation (inactive form) which is incapable of actin or membrane-binding. Its function is as follows. Ezrin-radixin-moesin (ERM) family protein that connects the actin cytoskeleton to the plasma membrane and thereby regulates the structure and function of specific domains of the cell cortex. Tethers actin filaments by oscillating between a resting and an activated state providing transient interactions between moesin and the actin cytoskeleton. Once phosphorylated on its C-terminal threonine, moesin is activated leading to interaction with F-actin and cytoskeletal rearrangement. These rearrangements regulate many cellular processes, including cell shape determination, membrane transport, and signal transduction. The role of moesin is particularly important in immunity acting on both T and B-cells homeostasis and self-tolerance, regulating lymphocyte egress from lymphoid organs. Modulates phagolysosomal biogenesis in macrophages. Participates also in immunologic synapse formation. The protein is Moesin of Bos taurus (Bovine).